Consider the following 226-residue polypeptide: Large ribosomal subunit protein uL1 (226 aa).

This sequence belongs to the universal ribosomal protein uL1 family. In terms of assembly, part of the 50S ribosomal subunit.

Binds directly to 23S rRNA. The L1 stalk is quite mobile in the ribosome, and is involved in E site tRNA release. Functionally, protein L1 is also a translational repressor protein, it controls the translation of the L11 operon by binding to its mRNA. This chain is Large ribosomal subunit protein uL1, found in Mycoplasma pneumoniae (strain ATCC 29342 / M129 / Subtype 1) (Mycoplasmoides pneumoniae).